Consider the following 227-residue polypeptide: NAD(P)H-quinone oxidoreductase subunit K, chloroplastic (227 aa).

[4Fe-4S] cluster is bound by residues Cys-43, Cys-44, Cys-108, and Cys-139.

It belongs to the complex I 20 kDa subunit family. In terms of assembly, NDH is composed of at least 16 different subunits, 5 of which are encoded in the nucleus. [4Fe-4S] cluster serves as cofactor.

Its subcellular location is the plastid. The protein resides in the chloroplast thylakoid membrane. It catalyses the reaction a plastoquinone + NADH + (n+1) H(+)(in) = a plastoquinol + NAD(+) + n H(+)(out). The catalysed reaction is a plastoquinone + NADPH + (n+1) H(+)(in) = a plastoquinol + NADP(+) + n H(+)(out). NDH shuttles electrons from NAD(P)H:plastoquinone, via FMN and iron-sulfur (Fe-S) centers, to quinones in the photosynthetic chain and possibly in a chloroplast respiratory chain. The immediate electron acceptor for the enzyme in this species is believed to be plastoquinone. Couples the redox reaction to proton translocation, and thus conserves the redox energy in a proton gradient. In Ranunculus macranthus (Large buttercup), this protein is NAD(P)H-quinone oxidoreductase subunit K, chloroplastic.